Here is a 76-residue protein sequence, read N- to C-terminus: ATP synthase subunit c (76 aa).

Transmembrane regions (helical) follow at residues 12–32 (LGSI…GIIF) and 54–74 (ILGF…PFVY).

Belongs to the ATPase C chain family. As to quaternary structure, F-type ATPases have 2 components, F(1) - the catalytic core - and F(0) - the membrane proton channel. F(1) has five subunits: alpha(3), beta(3), gamma(1), delta(1), epsilon(1). F(0) has three main subunits: a(1), b(2) and c(10-14). The alpha and beta chains form an alternating ring which encloses part of the gamma chain. F(1) is attached to F(0) by a central stalk formed by the gamma and epsilon chains, while a peripheral stalk is formed by the delta and b chains.

It localises to the cell membrane. Functionally, f(1)F(0) ATP synthase produces ATP from ADP in the presence of a proton or sodium gradient. F-type ATPases consist of two structural domains, F(1) containing the extramembraneous catalytic core and F(0) containing the membrane proton channel, linked together by a central stalk and a peripheral stalk. During catalysis, ATP synthesis in the catalytic domain of F(1) is coupled via a rotary mechanism of the central stalk subunits to proton translocation. In terms of biological role, key component of the F(0) channel; it plays a direct role in translocation across the membrane. A homomeric c-ring of between 10-14 subunits forms the central stalk rotor element with the F(1) delta and epsilon subunits. The chain is ATP synthase subunit c from Streptomyces coelicolor (strain ATCC BAA-471 / A3(2) / M145).